The following is a 188-amino-acid chain: Elongation factor P (188 aa).

Residue K34 is modified to N6-(3,6-diaminohexanoyl)-5-hydroxylysine.

This sequence belongs to the elongation factor P family. May be beta-lysylated on the epsilon-amino group of Lys-34 by the combined action of EpmA and EpmB, and then hydroxylated on the C5 position of the same residue by EpmC (if this protein is present). Lysylation is critical for the stimulatory effect of EF-P on peptide-bond formation. The lysylation moiety may extend toward the peptidyltransferase center and stabilize the terminal 3-CCA end of the tRNA. Hydroxylation of the C5 position on Lys-34 may allow additional potential stabilizing hydrogen-bond interactions with the P-tRNA.

It localises to the cytoplasm. The protein operates within protein biosynthesis; polypeptide chain elongation. Its function is as follows. Involved in peptide bond synthesis. Alleviates ribosome stalling that occurs when 3 or more consecutive Pro residues or the sequence PPG is present in a protein, possibly by augmenting the peptidyl transferase activity of the ribosome. Modification of Lys-34 is required for alleviation. This Xylella fastidiosa (strain M23) protein is Elongation factor P.